The primary structure comprises 964 residues: uncharacterized protein (964 aa).

2 disordered regions span residues 1 to 31 (MDSE…SDCE) and 169 to 199 (EETY…DEIS). The span at 10-27 (HSICNSVSSGENYKSPES) shows a compositional bias: polar residues. Residues 656-840 (EVMESLQVEI…LILNQTSMAK (185 aa)) adopt a coiled-coil conformation.

This is an uncharacterized protein from Caenorhabditis elegans.